The sequence spans 369 residues: Histidinol-phosphate aminotransferase 2 (369 aa).

An N6-(pyridoxal phosphate)lysine modification is found at K227.

This sequence belongs to the class-II pyridoxal-phosphate-dependent aminotransferase family. Histidinol-phosphate aminotransferase subfamily. In terms of assembly, homodimer. Pyridoxal 5'-phosphate serves as cofactor.

It carries out the reaction L-histidinol phosphate + 2-oxoglutarate = 3-(imidazol-4-yl)-2-oxopropyl phosphate + L-glutamate. It participates in amino-acid biosynthesis; L-histidine biosynthesis; L-histidine from 5-phospho-alpha-D-ribose 1-diphosphate: step 7/9. This Mesorhizobium japonicum (strain LMG 29417 / CECT 9101 / MAFF 303099) (Mesorhizobium loti (strain MAFF 303099)) protein is Histidinol-phosphate aminotransferase 2 (hisC2).